A 341-amino-acid polypeptide reads, in one-letter code: Small ribosomal subunit protein uS3 (341 aa).

A KH type-2 domain is found at 38-106 (IRRMMTRGME…QVQLNILEVK (69 aa)). Disordered regions lie at residues 224–246 (RAVR…LETA) and 274–341 (PAGQ…TKEG). Low complexity-rich tracts occupy residues 285–303 (AEQP…VTGE) and 311–333 (AAPA…DAPS).

It belongs to the universal ribosomal protein uS3 family. As to quaternary structure, part of the 30S ribosomal subunit. Forms a tight complex with proteins S10 and S14.

Its function is as follows. Binds the lower part of the 30S subunit head. Binds mRNA in the 70S ribosome, positioning it for translation. The polypeptide is Small ribosomal subunit protein uS3 (Acidothermus cellulolyticus (strain ATCC 43068 / DSM 8971 / 11B)).